A 1666-amino-acid chain; its full sequence is Complement C3 (1666 aa).

An N-terminal signal peptide occupies residues 1-22 (MGPAAGPSLLLLLLASVSLALG). S70, S296, and S302 each carry phosphoserine. 13 disulfides stabilise this stretch: C557–C821, C630–C666, C698–C725, C699–C732, C712–C733, C878–C1517, C1106–C1163, C1363–C1493, C1394–C1462, C1510–C1515, C1522–C1593, C1540–C1664, and C1640–C1649. A Phosphoserine modification is found at S676. The region spanning 698–733 (CCEDGMRENPMQFSCQRRARYVSLGEACVKAFLDCC) is the Anaphylatoxin-like domain. N-linked (GlcNAc...) asparagine glycosylation is present at N944. S973 is subject to Phosphoserine. Residues 1015-1018 (CGEQ) constitute a cross-link (isoglutamyl cysteine thioester (Cys-Gln)). S1326 carries the phosphoserine modification. In terms of domain architecture, NTR spans 1522-1664 (CFIQLPEKIT…FTENMVVFGC (143 aa)). The residue at position 1576 (S1576) is a Phosphoserine. N1620 is a glycosylation site (N-linked (GlcNAc...) asparagine). Residues 1637–1662 (AEECQDEENQQQCQDLGTFTENMVVF) form an interaction with CFP/properdin region.

As to quaternary structure, in absence of complement activation, the C3 precursor is first processed by the removal of 4 Arg residues, forming two chains, beta and alpha, linked by a disulfide bond. Complement C3b is composed of complement C3b and complement C3 beta chains that are associated via disulfide bonds. Non-enzymatic component of the C5 convertase, also named C4bC2bC3b, composed of the serine protease complement C2b (C2), complement C3b, as well as complement C4b (C4). Non-enzymatic component of the C5 convertase of the alternative complement pathways composed of the serine protease complement CFB and complement C3b. Interacts with CFP; interaction takes place together with CFB in the alternative complement system and allows the complex to become active. Interacts with CR1 (via Sushi 8 and Sushi 9 domains). Interacts with CFH. In terms of assembly, interacts with CFH. Interacts with CR2. As to quaternary structure, during pregnancy, C3dg exists as a complex (probably a 2:2:2 heterohexamer) with AGT and the proform of PRG2. Interacts with CR2 (via the N-terminal Sushi domains 1 and 2). C3 precursor is first processed by the removal of 4 Arg residues, forming two chains, beta and alpha, linked by a disulfide bond. During activation of the complement systems, the alpha chain is cleaved into C3a and C3b by the C3 convertase: C3b stays linked to the beta chain, while C3a is released in the plasma. The alpha chain is cleaved by the serine protease complement C2b component of the C3 convertase to generate C3a and C3b following activation by the classical, lectin and GZMK complement systems. The alpha chain is cleaved by CFB component of the C3 convertase to generate C3a and C3b following activation by the alternative complement system. Post-translationally, C3a is further processed by carboxypeptidases to release the C-terminal arginine residue generating the acylation stimulating protein (ASP). Levels of ASP are increased in adipocytes in the postprandial period and by insulin and dietary chylomicrons. In terms of processing, complement C3b is rapidly split in two positions by factor I (CFI) and a cofactor (CFH) to form iC3b (inactivated C3b) and C3f which is released. CFI and CFH catalyze proteolytic degradation of already-deposited complement C3b. Then iC3b is slowly cleaved (possibly by CFI) to form C3c (beta chain + alpha' chain fragment 1 + alpha' chain fragment 2), C3dg and C3f. Other proteases produce other fragments such as C3d or C3g. Upon activation, the internal thioester bond reacts with carbohydrate antigens on the target surface to form amide or ester bonds, leading to covalent association with the surface of pathogens. Post-translationally, complement C3b interacts with complement C4b via a thioester linkage. In terms of processing, phosphorylated by FAM20C in the extracellular medium.

The protein localises to the secreted. The protein resides in the cell surface. With respect to regulation, complement activation is inhibited by VSIG4. Precursor of non-enzymatic components of the classical, alternative, lectin and GZMK complement pathways, which consist in a cascade of proteins that leads to phagocytosis and breakdown of pathogens and signaling that strengthens the adaptive immune system. In terms of biological role, non-enzymatic component of C5 convertase. Generated following cleavage by C3 convertase, it covalently attaches to the surface of pathogens, where it acts as an opsonin that marks the surface of antigens for removal. Complement C3b binds covalently via its reactive thioester, to cell surface carbohydrates or immune aggregates. Together with complement C4b, it then recruits the serine protease complement C2b to form the C5 convertase, which cleaves and activate C5, the next component of the complement pathways. In the alternative complement pathway, recruits the serine protease CFB to form the C5 convertase that cleaves and activates C5. Its function is as follows. Mediator of local inflammatory process released following cleavage by C3 convertase. Acts by binding to its receptor, C3AR1, activating G protein-coupled receptor signaling, promoting the phosphorylation, ARRB2-mediated internalization and endocytosis of C3AR1. C3a anaphylatoxin stimulates the activation of immune cells such as mast cells and basophilic leukocytes to release inflammation agents, such as cytokines, chemokines and histamine, which promote inflammation development. Also acts as potent chemoattractant for the migration of macrophages and neutrophils to the inflamed tissues, resulting in neutralization of the inflammatory triggers by multiple ways, such as phagocytosis and generation of reactive oxidants. Functionally, adipogenic hormone that stimulates triglyceride synthesis and glucose transport in adipocytes, regulating fat storage and playing a role in postprandial triglyceride clearance. Appears to stimulate triglyceride synthesis via activation of the PLC, MAPK and AKT signaling pathways. Acts by binding to its receptor, C5AR2, activating G protein-coupled receptor signaling, promoting the phosphorylation, ARRB2-mediated internalization and endocytosis of C5AR2. Acts as a chemoattractant for neutrophils in chronic inflammation. The polypeptide is Complement C3 (Cavia porcellus (Guinea pig)).